Here is a 498-residue protein sequence, read N- to C-terminus: DELTA-thalatoxin-Avl2a (498 aa).

The first 22 residues, 1 to 22, serve as a signal peptide directing secretion; sequence MSPYFKLSSALIFLAITMEALC. Residues 23–35 constitute a propeptide that is removed on maturation; sequence SPIENTSTSNKDN. The MACPF domain maps to 23 to 359; it reads SPIENTSTSN…GFLHFGCSFL (337 aa). The stretch at 135–159 forms a coiled coil; it reads AAVTNNIASSEEEVQGLSLNLKAYS. Intrachain disulfides connect Cys-389/Cys-402, Cys-396/Cys-410, and Cys-412/Cys-422. In terms of domain architecture, EGF-like spans 410 to 422; the sequence is CECGGPYDLARTC.

The protein localises to the secreted. The protein resides in the nematocyst. Its function is as follows. Is lethal to mice, and may cause hemolytic activity. The chain is DELTA-thalatoxin-Avl2a from Actineria villosa (Okinawan sea anemone).